Consider the following 515-residue polypeptide: Putative pumilio homolog 8, chloroplastic (515 aa).

The interval 1 to 33 (MMRGEFGEASSLSRSPSSPLQTEPHPQSPKFYR) is disordered. The N-terminal 70 residues, 1–70 (MMRGEFGEAS…LSSYFSNGLC (70 aa)), are a transit peptide targeting the chloroplast. Residues 10-20 (SSLSRSPSSPL) show a composition bias toward low complexity. The region spanning 174 to 515 (SGVGALFDHQ…RIFSRNLLKN (342 aa)) is the PUM-HD domain. 8 Pumilio repeats span residues 198-233 (EFQG…VIFS), 234-269 (EVIP…QIIL), 270-308 (MVTS…SLVK), 310-345 (ALRP…FIFE), 346-381 (DATK…KLVT), 382-417 (EISR…AMLA), 418-456 (QLKG…ELIS), and 457-490 (VPHF…TLVE).

The protein resides in the plastid. The protein localises to the chloroplast. It localises to the cytoplasm. Functionally, sequence-specific RNA-binding protein that regulates translation and mRNA stability by binding the 3'-UTR of target mRNAs. The sequence is that of Putative pumilio homolog 8, chloroplastic (APUM8) from Arabidopsis thaliana (Mouse-ear cress).